The chain runs to 377 residues: Queuine tRNA-ribosyltransferase (377 aa).

Aspartate 92 acts as the Proton acceptor in catalysis. Substrate contacts are provided by residues 92–96 (DSGGF), aspartate 146, glutamine 190, and glycine 217. The interval 248 to 254 (GVGRPED) is RNA binding. The Nucleophile role is filled by aspartate 267. The RNA binding; important for wobble base 34 recognition stretch occupies residues 272-276 (TRHAR). Residues cysteine 305, cysteine 307, cysteine 310, and histidine 337 each coordinate Zn(2+).

This sequence belongs to the queuine tRNA-ribosyltransferase family. Homodimer. Within each dimer, one monomer is responsible for RNA recognition and catalysis, while the other monomer binds to the replacement base PreQ1. Zn(2+) is required as a cofactor.

The enzyme catalyses 7-aminomethyl-7-carbaguanine + guanosine(34) in tRNA = 7-aminomethyl-7-carbaguanosine(34) in tRNA + guanine. It participates in tRNA modification; tRNA-queuosine biosynthesis. Catalyzes the base-exchange of a guanine (G) residue with the queuine precursor 7-aminomethyl-7-deazaguanine (PreQ1) at position 34 (anticodon wobble position) in tRNAs with GU(N) anticodons (tRNA-Asp, -Asn, -His and -Tyr). Catalysis occurs through a double-displacement mechanism. The nucleophile active site attacks the C1' of nucleotide 34 to detach the guanine base from the RNA, forming a covalent enzyme-RNA intermediate. The proton acceptor active site deprotonates the incoming PreQ1, allowing a nucleophilic attack on the C1' of the ribose to form the product. After dissociation, two additional enzymatic reactions on the tRNA convert PreQ1 to queuine (Q), resulting in the hypermodified nucleoside queuosine (7-(((4,5-cis-dihydroxy-2-cyclopenten-1-yl)amino)methyl)-7-deazaguanosine). This Xylella fastidiosa (strain Temecula1 / ATCC 700964) protein is Queuine tRNA-ribosyltransferase.